The primary structure comprises 732 residues: Zinc/cadmium/lead-transporting P-type ATPase (732 aa).

At 1–124 the chain is on the cytoplasmic side; the sequence is MSTPDNHGKK…QAADEPQASR (124 aa). The 65-residue stretch at 48–112 folds into the HMA domain; that stretch reads TRYSWKVSGM…AVQKAGYSLR (65 aa). Residues Asp-58, Cys-59, and Cys-62 each coordinate Zn(2+). The chain crosses the membrane as a helical span at residues 125 to 145; sequence LKENLPLITLIVMMAISWGLE. A topological domain (periplasmic) is located at residue Gln-146. Residues 147-167 traverse the membrane as a helical segment; it reads FNHPFGQLAFIATTLVGLYPI. The Cytoplasmic portion of the chain corresponds to 168-179; sequence ARQALRLIKSGS. A helical transmembrane segment spans residues 180–197; the sequence is YFAIETLMSVAAIGALFI. Topologically, residues 198–202 are periplasmic; it reads GATAE. Residues 203–222 traverse the membrane as a helical segment; the sequence is AAMVLLLFLIGERLEGWAAS. Residues 223-356 lie on the Cytoplasmic side of the membrane; it reads RARQGVSALM…IDRFSRIYTP (134 aa). The helical transmembrane segment at 357 to 377 threads the bilayer; the sequence is AIMAVALLVTLVPPLLFAASW. The Periplasmic portion of the chain corresponds to 378-383; the sequence is QEWIYK. A helical transmembrane segment spans residues 384-404; that stretch reads GLTLLLIGCPCALVISTPAAI. The Zn(2+) site is built by Cys-392 and Cys-394. The Cytoplasmic segment spans residues 405–685; it reads TSGLAAAARR…RATHANIRQN (281 aa). Catalysis depends on Asp-436, which acts as the 4-aspartylphosphate intermediate. Residues Asp-436, Thr-438, and Asp-628 each coordinate Mg(2+). The helical transmembrane segment at 686–702 threads the bilayer; it reads ITIALGLKGIFLVTTLL. The Periplasmic segment spans residues 703–707; that stretch reads GMTGL. Residues 708–729 traverse the membrane as a helical segment; that stretch reads WLAVLADTGATVLVTANALRLL. Asp-714 lines the Zn(2+) pocket. Residues 730–732 lie on the Cytoplasmic side of the membrane; the sequence is RRR.

Belongs to the cation transport ATPase (P-type) (TC 3.A.3) family. Type IB subfamily.

Its subcellular location is the cell inner membrane. The enzyme catalyses Pb(2+)(in) + ATP + H2O = Pb(2+)(out) + ADP + phosphate + H(+). It carries out the reaction Zn(2+)(in) + ATP + H2O = Zn(2+)(out) + ADP + phosphate + H(+). It catalyses the reaction Cd(2+)(in) + ATP + H2O = Cd(2+)(out) + ADP + phosphate + H(+). Its function is as follows. Confers resistance to zinc, cadmium and lead. Couples the hydrolysis of ATP with the export of zinc, cadmium or lead. This chain is Zinc/cadmium/lead-transporting P-type ATPase, found in Shigella sonnei (strain Ss046).